The sequence spans 488 residues: Probable phenylalanine--tRNA ligase alpha subunit (488 aa).

Residues 1–146 (MSIEQDILNL…KRKLVDINKK (146 aa)) form a contains the major tRNA-Phe binding sites region. Residues Thr-315, 363–365 (QVE), and Tyr-403 contribute to the L-phenylalanine site. Mg(2+) is bound at residue Glu-405. Residue Phe-429 coordinates L-phenylalanine.

This sequence belongs to the class-II aminoacyl-tRNA synthetase family. Phe-tRNA synthetase alpha subunit type 2 subfamily. Tetramer of two alpha and two beta subunits. Mg(2+) is required as a cofactor.

It localises to the cytoplasm. It carries out the reaction tRNA(Phe) + L-phenylalanine + ATP = L-phenylalanyl-tRNA(Phe) + AMP + diphosphate + H(+). This chain is Probable phenylalanine--tRNA ligase alpha subunit, found in Enterocytozoon bieneusi (strain H348) (Microsporidian parasite).